A 309-amino-acid polypeptide reads, in one-letter code: Dicarboxylate carrier UCP2 (309 aa).

Over 1–16 (MVGFKATDVPPTATVK) the chain is Mitochondrial intermembrane. 3 Solcar repeats span residues 11–106 (PTAT…VKQF), 114–203 (AGIG…IKDT), and 212–297 (DDLP…LKRA). The interval 16-63 (KFLGAGTAACIADLITFPLDTAKVRLQIQGESQGLARTAASAQYRGVL) is important for interaction with long-chain fatty acids. A helical membrane pass occupies residues 17 to 40 (FLGAGTAACIADLITFPLDTAKVR). Residues 41-77 (LQIQGESQGLARTAASAQYRGVLGTILTMVRTEGPRS) lie on the Mitochondrial matrix side of the membrane. A helical membrane pass occupies residues 78–103 (LYNGLVAGLQRQMSFASVRIGLYDSV). Topologically, residues 104–119 (KQFYTKGSEHAGIGSR) are mitochondrial intermembrane. Residues 120-145 (LLAGSTTGALAVAVAQPTDVVKVRFQ) form a helical membrane-spanning segment. The Mitochondrial matrix segment spans residues 146-173 (AQARAGGGRRYQSTVEAYKTIAREEGIR). A helical membrane pass occupies residues 174-199 (GLWKGTSPNVARNAIVNCTELVTYDL). The Mitochondrial intermembrane segment spans residues 200–217 (IKDTLLKANLMTDDLPCH). The helical transmembrane segment at 218 to 242 (FTSAFGAGFCTTVIASPVDVVKTRY) threads the bilayer. Residues 243–268 (MNSALGQYHSAGHCALTMLRKEGPRA) lie on the Mitochondrial matrix side of the membrane. Residues 269–294 (FYKGFMPSFLRLGSWNVVMFVTYEQL) form a helical membrane-spanning segment. Positions 278–285 (LRLGSWNV) are important for interaction with long-chain fatty acids. Residues 295–309 (KRALMAAYESREAPF) lie on the Mitochondrial intermembrane side of the membrane.

Belongs to the mitochondrial carrier (TC 2.A.29) family. As to quaternary structure, homotetramer. Adopts an asymmetrical dimer of dimers functional form. Interacts with MICU1 (when methylated); leading to decrease the calcium sensitivity of MICU1. In terms of tissue distribution, expressed in a variety of organs, with predominant expression in the heart, lung and spleen.

Its subcellular location is the mitochondrion inner membrane. The catalysed reaction is L-aspartate(out) + phosphate(in) + H(+)(in) = L-aspartate(in) + phosphate(out) + H(+)(out). It carries out the reaction oxaloacetate(out) + phosphate(in) + H(+)(in) = oxaloacetate(in) + phosphate(out) + H(+)(out). It catalyses the reaction (S)-malate(out) + phosphate(in) + H(+)(in) = (S)-malate(in) + phosphate(out) + H(+)(out). The enzyme catalyses malonate(out) + phosphate(in) + H(+)(in) = malonate(in) + phosphate(out) + H(+)(out). The catalysed reaction is sulfate(out) + phosphate(in) + H(+)(in) = sulfate(in) + phosphate(out) + H(+)(out). It carries out the reaction (S)-malate(out) = (S)-malate(in). It catalyses the reaction L-aspartate(out) = L-aspartate(in). The enzyme catalyses phosphate(in) = phosphate(out). The catalysed reaction is chloride(in) = chloride(out). It carries out the reaction H(+)(in) = H(+)(out). It catalyses the reaction a long-chain fatty acid(out) = a long-chain fatty acid(in). In terms of biological role, antiporter that exports dicarboxylate intermediates of the Krebs cycle in exchange for phosphate plus a proton across the inner membrane of mitochondria, a process driven by mitochondrial motive force with an overall impact on glycolysis, glutaminolysis and glutathione-dependent redox balance. Continuous export of oxaloacetate and related four-carbon dicarboxylates from mitochondrial matrix into the cytosol negatively regulates the oxidation of acetyl-CoA substrates via the Krebs cycle lowering the ATP/ADP ratio and reactive oxygen species (ROS) production. May mediate inducible proton entry into the mitochondrial matrix affecting ATP turnover as a protection mechanism against oxidative stress. The proton currents are most likely associated with fatty acid flipping across the inner membrane of mitochondria in a metabolic process regulated by free fatty acids and purine nucleotides. Regulates the use of glucose as a source of energy. Required for glucose-induced DRP1-dependent mitochondrial fission and neuron activation in the ventromedial nucleus of the hypothalamus (VMH). This mitochondrial adaptation mechanism modulates the VMH pool of glucose-excited neurons with an impact on systemic glucose homeostasis. Regulates ROS levels and metabolic reprogramming of macrophages during the resolution phase of inflammation. Attenuates ROS production in response to IL33 to preserve the integrity of the Krebs cycle required for persistent production of itaconate and subsequent GATA3-dependent differentiation of inflammation-resolving alternatively activated macrophages. Can unidirectionally transport anions including L-malate, L-aspartate, phosphate and chloride ions. Does not mediate adaptive thermogenesis. This is Dicarboxylate carrier UCP2 (Ucp2) from Rattus norvegicus (Rat).